The sequence spans 195 residues: Peptidyl-tRNA hydrolase (195 aa).

Tyr-18 is a tRNA binding site. The active-site Proton acceptor is the His-23. 3 residues coordinate tRNA: Phe-69, Asn-71, and Asn-117.

The protein belongs to the PTH family. As to quaternary structure, monomer.

The protein localises to the cytoplasm. The enzyme catalyses an N-acyl-L-alpha-aminoacyl-tRNA + H2O = an N-acyl-L-amino acid + a tRNA + H(+). Functionally, hydrolyzes ribosome-free peptidyl-tRNAs (with 1 or more amino acids incorporated), which drop off the ribosome during protein synthesis, or as a result of ribosome stalling. In terms of biological role, catalyzes the release of premature peptidyl moieties from peptidyl-tRNA molecules trapped in stalled 50S ribosomal subunits, and thus maintains levels of free tRNAs and 50S ribosomes. The protein is Peptidyl-tRNA hydrolase of Alcanivorax borkumensis (strain ATCC 700651 / DSM 11573 / NCIMB 13689 / SK2).